Here is a 71-residue protein sequence, read N- to C-terminus: Small ribosomal subunit protein bS21 (71 aa).

Over residues 49-59 (AAAAVKRHAKK) the composition is skewed to basic residues. A disordered region spans residues 49–71 (AAAAVKRHAKKVQREQRRSVRLY). Over residues 60–71 (VQREQRRSVRLY) the composition is skewed to basic and acidic residues.

The protein belongs to the bacterial ribosomal protein bS21 family.

This chain is Small ribosomal subunit protein bS21, found in Stutzerimonas stutzeri (strain A1501) (Pseudomonas stutzeri).